The sequence spans 345 residues: Beta-2-glycoprotein 1 (345 aa).

A signal peptide spans 1–19 (MPPPALVLLLGFLCHVAIA). Sushi domains are found at residues 21–81 (RTCP…KCMP), 82–139 (RVCP…VCAP), 140–202 (ITCP…ECRE), and 203–262 (VRCP…SCKA). Intrachain disulfides connect C23/C66, C51/C79, C84/C124, C110/C137, C142/C188, C174/C200, C205/C248, C234/C260, C264/C315, C300/C325, and C307/C345. T33 is a glycosylation site (O-linked (GalNAc...) threonine). An N-linked (GlcNAc...) asparagine glycan is attached at N92. Residues N162, N183, and N193 are each glycosylated (N-linked (GlcNAc...) asparagine). A glycan (N-linked (GlcNAc...) asparagine) is linked at N253. Positions 263 to 345 (SCKLSIKRAT…KTDASDVKPC (83 aa)) are sushi-like.

As to expression, expressed by the liver and secreted in plasma.

The protein localises to the secreted. In terms of biological role, binds to various kinds of negatively charged substances such as heparin, phospholipids, and dextran sulfate. May prevent activation of the intrinsic blood coagulation cascade by binding to phospholipids on the surface of damaged cells. This is Beta-2-glycoprotein 1 (APOH) from Bos taurus (Bovine).